Here is a 367-residue protein sequence, read N- to C-terminus: MAAPEIPKKQKAVIYDNPGTVSTKVVELDVPEPGDNEVLINLTHSGVCHSDFGIMTNTWKILPFPTQPGQVGGHEGVGKVVKLGAGAEASGLKIGDRVGVKWISSACGQCPPCQDGADGLCFNQKVSGYYTPGTFQQYVLGPAQYVTPIPDGLPSAEAAPLLCAGVTVYASLKRSKAQPGQWIVISGAGGGLGHLAVQIAAKGMGLRVIGVDHGSKEELVKASGAEHFVDITKFPTGDKFEAISSHVKSLTTKGLGAHAVIVCTASNIAYAQSLLFLRYNGTMVCVGIPENEPQAIASAYPGLFIQKHVHVTGSAVGNRNEAIETMEFAARGVIKAHFREEKMEALTEIFKEMEEGKLQGRVVLDLS.

Residues Cys-48, His-74, Cys-107, Cys-110, Cys-113, Cys-121, and Cys-163 each coordinate Zn(2+). Residues 187 to 193 (GAGGGLG), Asp-212, Lys-216, 286 to 288 (VGI), and Arg-361 contribute to the NAD(+) site.

This sequence belongs to the zinc-containing alcohol dehydrogenase family. In terms of assembly, homotetramer. Zn(2+) is required as a cofactor.

It localises to the cytoplasm. It carries out the reaction a primary alcohol + NAD(+) = an aldehyde + NADH + H(+). The catalysed reaction is a secondary alcohol + NAD(+) = a ketone + NADH + H(+). This chain is Alcohol dehydrogenase 2 (alcB), found in Emericella nidulans (strain FGSC A4 / ATCC 38163 / CBS 112.46 / NRRL 194 / M139) (Aspergillus nidulans).